The primary structure comprises 146 residues: Prolactin-inducible protein homolog (146 aa).

An N-terminal signal peptide occupies residues 1 to 28 (MHLLQLLFRASPATLLLVLCLQLGANKA). Pyrrolidone carboxylic acid is present on Gln-29. Intrachain disulfides connect Cys-65–Cys-91 and Cys-89–Cys-123. The N-linked (GlcNAc...) asparagine glycan is linked to Asn-105.

This sequence belongs to the PIP family. Monomer. Interacts with AZGP1.

The protein resides in the secreted. The chain is Prolactin-inducible protein homolog (PIP) from Pongo pygmaeus (Bornean orangutan).